We begin with the raw amino-acid sequence, 228 residues long: Ankyrin repeat domain-containing protein 46 (228 aa).

ANK repeat units follow at residues 11–40 (QTNVPLLQACIDGDFTYSKRLLESGFDPNI), 44–74 (RGRTGLHLAAARGNVDICQLLHKFGADPLAT), 77–103 (QGNTALHLCGHVDTIQFLVSNGLKIDI), and 107–138 (QGATPLVLAKRRGVNKDVIRLLESLEEQEVKG). A helical membrane pass occupies residues 195–215 (VLLLILVIALLSLGIAYYVSG).

It is found in the membrane. The sequence is that of Ankyrin repeat domain-containing protein 46 (Ankrd46) from Rattus norvegicus (Rat).